The chain runs to 329 residues: Beta-1,3-galactosyltransferase 6 (329 aa).

Over 1-11 the chain is Cytoplasmic; it reads MKLLRRAWRRR. Residues 12 to 34 traverse the membrane as a helical; Signal-anchor for type II membrane protein segment; sequence AALGLGTLALCGAALLYLARCAA. Over 35–329 the chain is Lumenal; it reads EPGDPRAMSG…QCCQRREGIP (295 aa). N131 carries an N-linked (GlcNAc...) asparagine glycan.

Belongs to the glycosyltransferase 31 family. It depends on Mn(2+) as a cofactor. Ubiquitous.

It is found in the golgi apparatus. It localises to the golgi stack membrane. It carries out the reaction 3-O-(beta-D-galactosyl-(1-&gt;4)-beta-D-xylosyl)-L-seryl-[protein] + UDP-alpha-D-galactose = 3-O-(beta-D-galactosyl-(1-&gt;3)-beta-D-galactosyl-(1-&gt;4)-beta-D-xylosyl)-L-seryl-[protein] + UDP + H(+). Its pathway is glycan metabolism; chondroitin sulfate biosynthesis. It participates in glycan metabolism; heparan sulfate biosynthesis. Functionally, beta-1,3-galactosyltransferase that transfers galactose from UDP-galactose to substrates with a terminal beta-linked galactose residue. Has a preference for galactose-beta-1,4-xylose that is found in the linker region of glycosaminoglycans, such as heparan sulfate and chondroitin sulfate. Has no activity towards substrates with terminal glucosamine or galactosamine residues. In Homo sapiens (Human), this protein is Beta-1,3-galactosyltransferase 6 (B3GALT6).